The primary structure comprises 486 residues: UDP-N-acetylmuramoyl-L-alanyl-D-glutamate--2,6-diaminopimelate ligase (486 aa).

Ser30 contributes to the UDP-N-acetyl-alpha-D-muramoyl-L-alanyl-D-glutamate binding site. 112–118 (GTNGKTT) lines the ATP pocket. Residues 154–155 (TT), Ser181, Gln187, and Arg189 contribute to the UDP-N-acetyl-alpha-D-muramoyl-L-alanyl-D-glutamate site. The residue at position 221 (Lys221) is an N6-carboxylysine. Residues Arg378, 402-405 (DNPR), Gly455, and Glu459 each bind meso-2,6-diaminopimelate. A Meso-diaminopimelate recognition motif motif is present at residues 402–405 (DNPR).

Belongs to the MurCDEF family. MurE subfamily. It depends on Mg(2+) as a cofactor. In terms of processing, carboxylation is probably crucial for Mg(2+) binding and, consequently, for the gamma-phosphate positioning of ATP.

The protein resides in the cytoplasm. The catalysed reaction is UDP-N-acetyl-alpha-D-muramoyl-L-alanyl-D-glutamate + meso-2,6-diaminopimelate + ATP = UDP-N-acetyl-alpha-D-muramoyl-L-alanyl-gamma-D-glutamyl-meso-2,6-diaminopimelate + ADP + phosphate + H(+). It participates in cell wall biogenesis; peptidoglycan biosynthesis. Its function is as follows. Catalyzes the addition of meso-diaminopimelic acid to the nucleotide precursor UDP-N-acetylmuramoyl-L-alanyl-D-glutamate (UMAG) in the biosynthesis of bacterial cell-wall peptidoglycan. This chain is UDP-N-acetylmuramoyl-L-alanyl-D-glutamate--2,6-diaminopimelate ligase, found in Cytophaga hutchinsonii (strain ATCC 33406 / DSM 1761 / CIP 103989 / NBRC 15051 / NCIMB 9469 / D465).